The sequence spans 740 residues: Phosphoribosylformylglycinamidine synthase subunit PurL (740 aa).

The active site involves His55. Residues Tyr58 and Lys97 each coordinate ATP. Residue Glu99 coordinates Mg(2+). Substrate-binding positions include 100 to 103 (SHNH) and Arg122. His101 serves as the catalytic Proton acceptor. Mg(2+) is bound at residue Asp123. Gln246 provides a ligand contact to substrate. Mg(2+) is bound at residue Asp276. 320–322 (ESQ) lines the substrate pocket. Positions 501 and 538 each coordinate ATP. Asn539 is a Mg(2+) binding site. Ser541 contacts substrate.

Belongs to the FGAMS family. Monomer. Part of the FGAM synthase complex composed of 1 PurL, 1 PurQ and 2 PurS subunits.

Its subcellular location is the cytoplasm. It catalyses the reaction N(2)-formyl-N(1)-(5-phospho-beta-D-ribosyl)glycinamide + L-glutamine + ATP + H2O = 2-formamido-N(1)-(5-O-phospho-beta-D-ribosyl)acetamidine + L-glutamate + ADP + phosphate + H(+). It participates in purine metabolism; IMP biosynthesis via de novo pathway; 5-amino-1-(5-phospho-D-ribosyl)imidazole from N(2)-formyl-N(1)-(5-phospho-D-ribosyl)glycinamide: step 1/2. Functionally, part of the phosphoribosylformylglycinamidine synthase complex involved in the purines biosynthetic pathway. Catalyzes the ATP-dependent conversion of formylglycinamide ribonucleotide (FGAR) and glutamine to yield formylglycinamidine ribonucleotide (FGAM) and glutamate. The FGAM synthase complex is composed of three subunits. PurQ produces an ammonia molecule by converting glutamine to glutamate. PurL transfers the ammonia molecule to FGAR to form FGAM in an ATP-dependent manner. PurS interacts with PurQ and PurL and is thought to assist in the transfer of the ammonia molecule from PurQ to PurL. This chain is Phosphoribosylformylglycinamidine synthase subunit PurL, found in Lacticaseibacillus casei (Lactobacillus casei).